The sequence spans 273 residues: Urease accessory protein UreD (273 aa).

Positions 1-29 (MLMRTATPLDQPRAIGSARVSSKRVNGGS) are disordered.

The protein belongs to the UreD family. In terms of assembly, ureD, UreF and UreG form a complex that acts as a GTP-hydrolysis-dependent molecular chaperone, activating the urease apoprotein by helping to assemble the nickel containing metallocenter of UreC. The UreE protein probably delivers the nickel.

It localises to the cytoplasm. Its function is as follows. Required for maturation of urease via the functional incorporation of the urease nickel metallocenter. This Roseobacter denitrificans (strain ATCC 33942 / OCh 114) (Erythrobacter sp. (strain OCh 114)) protein is Urease accessory protein UreD.